The primary structure comprises 864 residues: Probable LRR receptor-like serine/threonine-protein kinase At1g07550 (864 aa).

A signal peptide spans 1–23 (MDTCTRLLFAACATLSILHLVQS). Topologically, residues 24 to 507 (QNQQGFISLD…SCGTRFPTAA (484 aa)) are extracellular. Asn49, Asn229, Asn256, Asn289, Asn432, Asn445, and Asn464 each carry an N-linked (GlcNAc...) asparagine glycan. LRR repeat units follow at residues 411-434 (RIVKLDLSSSGLNGVIPPSIQNLT), 435-457 (QLQELDLSQNNLTGKVPEFLAKM), and 459-480 (YLLVINLSGNKLSGLVPQALLD). A helical transmembrane segment spans residues 508–528 (VAASVSAVAIIILVLVLIFVL). The Cytoplasmic segment spans residues 529-864 (RRRKPSAGKV…VDTEINPKAR (336 aa)). Thr551 carries the phosphothreonine modification. The Protein kinase domain maps to 560-831 (NNFQVVIGKG…QVVHVLNECL (272 aa)). ATP contacts are provided by residues 566-574 (IGKGGFGVV) and Lys587. Tyr632 is modified (phosphotyrosine). The active-site Proton acceptor is Asp684. Phosphothreonine occurs at positions 718 and 723. At Tyr731 the chain carries Phosphotyrosine.

Belongs to the protein kinase superfamily. Ser/Thr protein kinase family.

It localises to the membrane. It catalyses the reaction L-seryl-[protein] + ATP = O-phospho-L-seryl-[protein] + ADP + H(+). The catalysed reaction is L-threonyl-[protein] + ATP = O-phospho-L-threonyl-[protein] + ADP + H(+). This is Probable LRR receptor-like serine/threonine-protein kinase At1g07550 from Arabidopsis thaliana (Mouse-ear cress).